The chain runs to 584 residues: Probable terpene synthase 9 (584 aa).

3 residues coordinate Mg(2+): Asp339, Asp343, and Glu491. The DDXXD motif signature appears at 339–343; that stretch reads DDMYD.

It belongs to the terpene synthase family. It depends on Mg(2+) as a cofactor.

Probable sesquiterpene synthase. The polypeptide is Probable terpene synthase 9 (TPS9) (Ricinus communis (Castor bean)).